A 265-amino-acid polypeptide reads, in one-letter code: Sulfur carrier protein FdhD (265 aa).

Catalysis depends on Cys107, which acts as the Cysteine persulfide intermediate.

The protein belongs to the FdhD family.

Its subcellular location is the cytoplasm. Its function is as follows. Required for formate dehydrogenase (FDH) activity. Acts as a sulfur carrier protein that transfers sulfur from IscS to the molybdenum cofactor prior to its insertion into FDH. The protein is Sulfur carrier protein FdhD of Staphylococcus aureus (strain JH9).